The primary structure comprises 192 residues: INO80 complex subunit C (192 aa).

The disordered stretch occupies residues 1–44 (MAAQIPIVATTSTPGIVRNSKKRPASPSHNGSSGGGYGASKKKK).

As to quaternary structure, component of the chromatin remodeling INO80 complex; specifically part of a complex module associated with the helicase ATP-binding and the helicase C-terminal domain of INO80. Component of some MLL1/MLL complex, at least composed of the core components KMT2A/MLL1, ASH2L, HCFC1/HCF1, WDR5 and RBBP5, as well as the facultative components BACC1, CHD8, E2F6, HSP70, INO80C, KANSL1, LAS1L, MAX, MCRS1, MGA, MYST1/MOF, PELP1, PHF20, PRP31, RING2, RUVB1/TIP49A, RUVB2/TIP49B, SENP3, TAF1, TAF4, TAF6, TAF7, TAF9 and TEX10.

Its subcellular location is the nucleus. Its function is as follows. Proposed core component of the chromatin remodeling INO80 complex which is involved in transcriptional regulation, DNA replication and probably DNA repair. The sequence is that of INO80 complex subunit C (INO80C) from Homo sapiens (Human).